The chain runs to 265 residues: Synaptoporin (265 aa).

Residues 1 to 4 (MCMV) are Cytoplasmic-facing. The MARVEL domain occupies 1–202 (MCMVIFAPLF…NIWFVFKETG (202 aa)). A helical membrane pass occupies residues 5 to 25 (IFAPLFAMFAFATCGGYSGGL). The Vesicular segment spans residues 26-81 (RLSVDCVNKTESNLSIDIAFAYPFRLQQVTFEVPTCEGKEQQKLALVGDSSSSAEF). N33 and N38 each carry an N-linked (GlcNAc...) asparagine glycan. The helical transmembrane segment at 82–102 (FVTVAVFAFLYSLAATVVYIF) threads the bilayer. Residues 103-114 (FQNKYRENNRGP) are Cytoplasmic-facing. Residues 115–135 (LIDFIVTVVFSFLWLVGSSAW) form a helical membrane-spanning segment. Topologically, residues 136-177 (AKGLSDVKVATDPKEVLLLMSACKQPSNKCMAVHSPVMSSLN) are vesicular. A helical membrane pass occupies residues 178-198 (TSVVFGFLNFILWAGNIWFVF). Over 199–265 (KETGWHSSGQ…SGPTSFNNQI (67 aa)) the chain is Cytoplasmic. 5 consecutive repeat copies span residues 210–214 (YLSDP), 222–226 (YNQGR), 227–231 (YNQES), 232–236 (YGSSG), and 238–242 (YSQQA). The tract at residues 210–242 (YLSDPMEKHSSSYNQGRYNQESYGSSGGYSQQA) is 5 X approximate repeats. Residue S212 is modified to Phosphoserine. Positions 221–230 (SYNQGRYNQE) are enriched in polar residues. The segment at 221 to 265 (SYNQGRYNQESYGSSGGYSQQANLGPTSDEFGQQPSGPTSFNNQI) is disordered. Polar residues predominate over residues 240–265 (QQANLGPTSDEFGQQPSGPTSFNNQI).

This sequence belongs to the synaptophysin/synaptobrevin family.

It localises to the cytoplasmic vesicle. It is found in the secretory vesicle. The protein localises to the synaptic vesicle membrane. The protein resides in the synapse. Its subcellular location is the synaptosome. Intrinsic membrane protein of small synaptic vesicles. Probable vesicular channel protein. In Mus musculus (Mouse), this protein is Synaptoporin (Synpr).